Consider the following 413-residue polypeptide: Multifunctional CCA protein (413 aa).

ATP-binding residues include Gly8 and Arg11. Residues Gly8 and Arg11 each coordinate CTP. Mg(2+) contacts are provided by Asp21 and Asp23. Residues Arg91, Arg143, and Arg146 each contribute to the ATP site. Arg91, Arg143, and Arg146 together coordinate CTP. An HD domain is found at 232 to 333 (TGVHVMMVVD…VRLFERSDAL (102 aa)).

The protein belongs to the tRNA nucleotidyltransferase/poly(A) polymerase family. Bacterial CCA-adding enzyme type 1 subfamily. As to quaternary structure, monomer. Can also form homodimers and oligomers. Requires Mg(2+) as cofactor. Ni(2+) is required as a cofactor.

The catalysed reaction is a tRNA precursor + 2 CTP + ATP = a tRNA with a 3' CCA end + 3 diphosphate. The enzyme catalyses a tRNA with a 3' CCA end + 2 CTP + ATP = a tRNA with a 3' CCACCA end + 3 diphosphate. In terms of biological role, catalyzes the addition and repair of the essential 3'-terminal CCA sequence in tRNAs without using a nucleic acid template. Adds these three nucleotides in the order of C, C, and A to the tRNA nucleotide-73, using CTP and ATP as substrates and producing inorganic pyrophosphate. tRNA 3'-terminal CCA addition is required both for tRNA processing and repair. Also involved in tRNA surveillance by mediating tandem CCA addition to generate a CCACCA at the 3' terminus of unstable tRNAs. While stable tRNAs receive only 3'-terminal CCA, unstable tRNAs are marked with CCACCA and rapidly degraded. The sequence is that of Multifunctional CCA protein from Burkholderia cenocepacia (strain HI2424).